Here is a 90-residue protein sequence, read N- to C-terminus: DNA-directed RNA polymerase subunit omega (90 aa).

The interval 69–90 (RQEQQEQDAAELAAVSSITHNR) is disordered.

Belongs to the RNA polymerase subunit omega family. In terms of assembly, the RNAP catalytic core consists of 2 alpha, 1 beta, 1 beta' and 1 omega subunit. When a sigma factor is associated with the core the holoenzyme is formed, which can initiate transcription.

It catalyses the reaction RNA(n) + a ribonucleoside 5'-triphosphate = RNA(n+1) + diphosphate. Functionally, promotes RNA polymerase assembly. Latches the N- and C-terminal regions of the beta' subunit thereby facilitating its interaction with the beta and alpha subunits. This chain is DNA-directed RNA polymerase subunit omega, found in Aliivibrio salmonicida (strain LFI1238) (Vibrio salmonicida (strain LFI1238)).